The primary structure comprises 425 residues: Cysteate synthase (425 aa).

Lys106 is modified (N6-(pyridoxal phosphate)lysine). Asn132 and Thr382 together coordinate pyridoxal 5'-phosphate.

Belongs to the threonine synthase family. Cysteate synthase subfamily. As to quaternary structure, homotrimer. The cofactor is pyridoxal 5'-phosphate.

It catalyses the reaction O-phospho-L-serine + sulfite + H(+) = L-cysteate + phosphate. Its pathway is cofactor biosynthesis; coenzyme M biosynthesis. In terms of biological role, specifically catalyzes the beta-elimination of phosphate from L-phosphoserine and the beta-addition of sulfite to the dehydroalanine intermediate to produce L-cysteate. This Methanosphaerula palustris (strain ATCC BAA-1556 / DSM 19958 / E1-9c) protein is Cysteate synthase.